The primary structure comprises 993 residues: Isoleucine--tRNA ligase, mitochondrial (993 aa).

A mitochondrion-targeting transit peptide spans 1–29 (SLWGTPRLPCSPGWQGATKRLLVRSVSGA). At lysine 55 the chain carries N6-acetyllysine; alternate. An N6-succinyllysine; alternate modification is found at lysine 55. Residues 97–107 (PYANGDPHVGH) carry the 'HIGH' region motif. An N6-acetyllysine modification is found at lysine 170. Position 175 is an N6-succinyllysine (lysine 175). Lysine 214 carries the post-translational modification N6-acetyllysine. Lysine 222 carries the post-translational modification N6-acetyllysine; alternate. N6-succinyllysine; alternate is present on lysine 222. 2 positions are modified to N6-succinyllysine: lysine 460 and lysine 481. Residues lysine 645 and lysine 648 each contribute to the ATP site. A 'KMSKS' region motif is present at residues 645–649 (KMSKS). Position 706 is an N6-acetyllysine (lysine 706). Residues lysine 756 and lysine 762 each carry the N6-acetyllysine; alternate modification. An N6-succinyllysine; alternate mark is found at lysine 756 and lysine 762.

The protein belongs to the class-I aminoacyl-tRNA synthetase family.

The protein localises to the mitochondrion matrix. The enzyme catalyses tRNA(Ile) + L-isoleucine + ATP = L-isoleucyl-tRNA(Ile) + AMP + diphosphate. Aminoacyl-tRNA synthetase that catalyzes the specific attachment of isoleucine to its cognate tRNA (tRNA(Ile)). This chain is Isoleucine--tRNA ligase, mitochondrial (IARS2), found in Macaca fascicularis (Crab-eating macaque).